The primary structure comprises 328 residues: MQNSPTEYLKPRVVDVDVISPVRARVTLEPMERGFGYTLGNALRRVLLSSIPGFAITEVKIDGVVHEYSTLDGVQEDVVDILLNLKGVALKLNSKNEATLTLNKSTEGVVTAGDFDTGHDAEIANPDHVIAHLTKGGKLNLEVKVEMGRGYQPVPQRRKTEDEDRVLGFIQVDASFSPISKVSYQVESARVEQRTDLDKLIMDVETNGIIEPEQAIRDAARILMGQLSVFADLEGAPSEVEVKQAPQVDPILLRPVDDLELTVRSANCLKAENIYYIGDLIQRTENELLKAPNLGRKSLNEIKDVLASKGLTLGMKLENWPPAGLEKV.

Residues 1–234 (MQNSPTEYLK…GQLSVFADLE (234 aa)) form an alpha N-terminal domain (alpha-NTD) region. The alpha C-terminal domain (alpha-CTD) stretch occupies residues 248–328 (VDPILLRPVD…NWPPAGLEKV (81 aa)).

Belongs to the RNA polymerase alpha chain family. Homodimer. The RNAP catalytic core consists of 2 alpha, 1 beta, 1 beta' and 1 omega subunit. When a sigma factor is associated with the core the holoenzyme is formed, which can initiate transcription.

The catalysed reaction is RNA(n) + a ribonucleoside 5'-triphosphate = RNA(n+1) + diphosphate. DNA-dependent RNA polymerase catalyzes the transcription of DNA into RNA using the four ribonucleoside triphosphates as substrates. The protein is DNA-directed RNA polymerase subunit alpha of Methylobacillus flagellatus (strain ATCC 51484 / DSM 6875 / VKM B-1610 / KT).